The primary structure comprises 447 residues: Acidic leucine-rich nuclear phosphoprotein 32-related protein (447 aa).

LRR repeat units follow at residues 49 to 70, 71 to 90, and 96 to 117; these read NLQH…PRLG, NLQK…EFLV, and SFCD…APLA. The LRRCT domain occupies 129 to 167; it reads CPVTRLKDYRSRVFGLIKTLKYLDKTDAEGNERPESDDE. The segment at 155-447 is disordered; it reads DAEGNERPES…EDDDDDDEER (293 aa). 2 stretches are compositionally biased toward acidic residues: residues 163 to 194 and 215 to 231; these read ESDD…EIDG and VDVD…DESE. A compositionally biased stretch (polar residues) spans 232-242; sequence QATGVNGTSYR. Acidic residues-rich tracts occupy residues 256–277, 284–309, 336–374, 397–415, and 433–447; these read VRED…DNDV, EDSE…EEVD, GDDD…EESG, PINE…DDLP, and DDDD…DEER.

Belongs to the ANP32 family.

The sequence is that of Acidic leucine-rich nuclear phosphoprotein 32-related protein from Arabidopsis thaliana (Mouse-ear cress).